The chain runs to 212 residues: Cytidylate kinase (212 aa).

9–17 (GPAAAGKGT) lines the ATP pocket.

Belongs to the cytidylate kinase family. Type 1 subfamily.

Its subcellular location is the cytoplasm. The catalysed reaction is CMP + ATP = CDP + ADP. The enzyme catalyses dCMP + ATP = dCDP + ADP. The chain is Cytidylate kinase from Rhizobium meliloti (strain 1021) (Ensifer meliloti).